Consider the following 881-residue polypeptide: Low-affinity phosphate transporter PHO90 (881 aa).

In terms of domain architecture, SPX spans 1–288 (MRFSHFLKYN…HLNTRTELIE (288 aa)). The next 12 membrane-spanning stretches (helical) occupy residues 417 to 437 (IYFIILVTGLLLGIKTFNDAA), 456 to 476 (AIPLHITAFLVPLLVVLFKVL), 493 to 513 (ILAAMWSSTIMILLAGFTLGE), 514 to 534 (VLAQYNIAKVLASWLLAFAGC), 539 to 559 (VLLMAMCVVFFLSMWISNVAA), 581 to 601 (AQALVLGVALAANIGGMSSPI), 663 to 683 (FTVKQYYIITVTVATILLWCV), 691 to 711 (FGSSGQIAIIPIVLFFGTGLL), 718 to 738 (AFPWSIVILAMGGIALGKAVS), 758 to 778 (GVFAILCIFGILMLVVGTFVS), 805 to 825 (ILVFGCALLSSCGMGLASSGF), and 854 to 874 (ASILAFLCVITLGYGIMASVV).

This sequence belongs to the CitM (TC 2.A.11) transporter family.

Its subcellular location is the membrane. Low-affinity phosphate transporter involved in the control of cellular phosphate levels. The protein is Low-affinity phosphate transporter PHO90 (PHO90) of Saccharomyces cerevisiae (strain ATCC 204508 / S288c) (Baker's yeast).